A 373-amino-acid chain; its full sequence is DNA replication and repair protein RecF (373 aa).

ATP is bound at residue 30 to 37 (GPNGQGKT).

The protein belongs to the RecF family.

It is found in the cytoplasm. Its function is as follows. The RecF protein is involved in DNA metabolism; it is required for DNA replication and normal SOS inducibility. RecF binds preferentially to single-stranded, linear DNA. It also seems to bind ATP. In Streptomyces avermitilis (strain ATCC 31267 / DSM 46492 / JCM 5070 / NBRC 14893 / NCIMB 12804 / NRRL 8165 / MA-4680), this protein is DNA replication and repair protein RecF.